Reading from the N-terminus, the 72-residue chain is Translation initiation factor IF-1 (72 aa).

The S1-like domain maps to 1-72 (MAKEDSIEMQ…TKGRIVFRAR (72 aa)).

It belongs to the IF-1 family. As to quaternary structure, component of the 30S ribosomal translation pre-initiation complex which assembles on the 30S ribosome in the order IF-2 and IF-3, IF-1 and N-formylmethionyl-tRNA(fMet); mRNA recruitment can occur at any time during PIC assembly.

The protein localises to the cytoplasm. Functionally, one of the essential components for the initiation of protein synthesis. Stabilizes the binding of IF-2 and IF-3 on the 30S subunit to which N-formylmethionyl-tRNA(fMet) subsequently binds. Helps modulate mRNA selection, yielding the 30S pre-initiation complex (PIC). Upon addition of the 50S ribosomal subunit IF-1, IF-2 and IF-3 are released leaving the mature 70S translation initiation complex. This chain is Translation initiation factor IF-1, found in Idiomarina loihiensis (strain ATCC BAA-735 / DSM 15497 / L2-TR).